Reading from the N-terminus, the 183-residue chain is ATP synthase subunit delta (183 aa).

Belongs to the ATPase delta chain family. F-type ATPases have 2 components, F(1) - the catalytic core - and F(0) - the membrane proton channel. F(1) has five subunits: alpha(3), beta(3), gamma(1), delta(1), epsilon(1). F(0) has three main subunits: a(1), b(2) and c(10-14). The alpha and beta chains form an alternating ring which encloses part of the gamma chain. F(1) is attached to F(0) by a central stalk formed by the gamma and epsilon chains, while a peripheral stalk is formed by the delta and b chains.

Its subcellular location is the cell inner membrane. F(1)F(0) ATP synthase produces ATP from ADP in the presence of a proton or sodium gradient. F-type ATPases consist of two structural domains, F(1) containing the extramembraneous catalytic core and F(0) containing the membrane proton channel, linked together by a central stalk and a peripheral stalk. During catalysis, ATP synthesis in the catalytic domain of F(1) is coupled via a rotary mechanism of the central stalk subunits to proton translocation. In terms of biological role, this protein is part of the stalk that links CF(0) to CF(1). It either transmits conformational changes from CF(0) to CF(1) or is implicated in proton conduction. This Thermotoga maritima (strain ATCC 43589 / DSM 3109 / JCM 10099 / NBRC 100826 / MSB8) protein is ATP synthase subunit delta.